Here is a 379-residue protein sequence, read N- to C-terminus: Gonadotropin-releasing hormone II receptor (379 aa).

Over M1–R45 the chain is Extracellular. N-linked (GlcNAc...) asparagine glycosylation is found at N4, N18, and N23. Residues V46 to L65 form a helical membrane-spanning segment. Over S66–R80 the chain is Cytoplasmic. A helical transmembrane segment spans residues P81 to L100. Residues D101 to K118 lie on the Extracellular side of the membrane. An N-linked (GlcNAc...) asparagine glycan is attached at N105. A disulfide bridge connects residues C117 and C194. A helical membrane pass occupies residues L119–L140. Over D141–W167 the chain is Cytoplasmic. A helical membrane pass occupies residues I168–I184. At K185 to N210 the chain is on the extracellular side. Residues M211–T230 traverse the membrane as a helical segment. At R231–T283 the chain is on the cytoplasmic side. The chain crosses the membrane as a helical span at residues P284–I302. Residues P303 to H308 are Extracellular-facing. A helical membrane pass occupies residues V309–F328. The Cytoplasmic portion of the chain corresponds to T329 to Q379. The tract at residues F355–Q379 is disordered.

The protein belongs to the G-protein coupled receptor 1 family. Phosphorylated on the C-terminal cytoplasmic tail.

It is found in the cell membrane. Its function is as follows. Receptor for gonadotropin releasing hormone II (GnRH II). This receptor mediates its action by association with G proteins that activate a phosphatidylinositol-calcium second messenger system. The sequence is that of Gonadotropin-releasing hormone II receptor from Clarias gariepinus (North African catfish).